The following is a 205-amino-acid chain: MDKRIIVLATKNEGKVREILEILSEYKDQIKTLKELEFDMDLPEETGKSYEENAFIKAKYVAEITGYPVIAEDSGLEIDALQGELGIYSARFGGNVGYKEKISLVLEKMKDTPWEDRKARFICKAVFYDMKEDVKIITGGKVEGYIAYEPKGEKGFGYDPIFYFPLLDKTFGEIDKSEKNKYSHRFLAFSKLKLFLDAYCKGGKI.

Residue threonine 10–lysine 15 coordinates substrate. Positions 44 and 73 each coordinate Mg(2+). The active-site Proton acceptor is the aspartate 73. Substrate is bound by residues serine 74, phenylalanine 156–aspartate 159, lysine 179, and histidine 184–arginine 185.

It belongs to the HAM1 NTPase family. As to quaternary structure, homodimer. It depends on Mg(2+) as a cofactor.

The catalysed reaction is XTP + H2O = XMP + diphosphate + H(+). It carries out the reaction dITP + H2O = dIMP + diphosphate + H(+). The enzyme catalyses ITP + H2O = IMP + diphosphate + H(+). Pyrophosphatase that catalyzes the hydrolysis of nucleoside triphosphates to their monophosphate derivatives, with a high preference for the non-canonical purine nucleotides XTP (xanthosine triphosphate), dITP (deoxyinosine triphosphate) and ITP. Seems to function as a house-cleaning enzyme that removes non-canonical purine nucleotides from the nucleotide pool, thus preventing their incorporation into DNA/RNA and avoiding chromosomal lesions. The sequence is that of dITP/XTP pyrophosphatase from Dictyoglomus thermophilum (strain ATCC 35947 / DSM 3960 / H-6-12).